The chain runs to 330 residues: Protein pelota homolog (330 aa).

It belongs to the eukaryotic release factor 1 family. Pelota subfamily. As to quaternary structure, monomer. The cofactor is a divalent metal cation.

Its subcellular location is the cytoplasm. In terms of biological role, may function in recognizing stalled ribosomes, interact with stem-loop structures in stalled mRNA molecules, and effect endonucleolytic cleavage of the mRNA. May play a role in the release non-functional ribosomes and degradation of damaged mRNAs. Has endoribonuclease activity. The chain is Protein pelota homolog from Pyrobaculum islandicum (strain DSM 4184 / JCM 9189 / GEO3).